Consider the following 310-residue polypeptide: Thiamine-monophosphate kinase (310 aa).

Asp-24, Thr-38, and Asp-39 together coordinate Mg(2+). Residue Asp-46 coordinates substrate. The Mg(2+) site is built by Asp-67 and Asp-115. ATP contacts are provided by residues Gly-114–Asp-115 and Arg-138. Asp-203 is a Mg(2+) binding site. Ser-205 lines the ATP pocket. Asp-206 serves as a coordination point for Mg(2+). The substrate site is built by Glu-251 and Trp-306.

Belongs to the thiamine-monophosphate kinase family.

It catalyses the reaction thiamine phosphate + ATP = thiamine diphosphate + ADP. The protein operates within cofactor biosynthesis; thiamine diphosphate biosynthesis; thiamine diphosphate from thiamine phosphate: step 1/1. Catalyzes the ATP-dependent phosphorylation of thiamine-monophosphate (TMP) to form thiamine-pyrophosphate (TPP), the active form of vitamin B1. The chain is Thiamine-monophosphate kinase from Nitrosopumilus maritimus (strain SCM1).